A 617-amino-acid chain; its full sequence is Dihydroxy-acid dehydratase (617 aa).

Asp-81 lines the Mg(2+) pocket. [2Fe-2S] cluster is bound at residue Cys-122. Mg(2+) contacts are provided by Asp-123 and Lys-124. An N6-carboxylysine modification is found at Lys-124. Residue Cys-195 coordinates [2Fe-2S] cluster. Residue Glu-492 coordinates Mg(2+). The active-site Proton acceptor is the Ser-518.

Belongs to the IlvD/Edd family. Homodimer. Requires [2Fe-2S] cluster as cofactor. Mg(2+) serves as cofactor.

It catalyses the reaction (2R)-2,3-dihydroxy-3-methylbutanoate = 3-methyl-2-oxobutanoate + H2O. The catalysed reaction is (2R,3R)-2,3-dihydroxy-3-methylpentanoate = (S)-3-methyl-2-oxopentanoate + H2O. It functions in the pathway amino-acid biosynthesis; L-isoleucine biosynthesis; L-isoleucine from 2-oxobutanoate: step 3/4. The protein operates within amino-acid biosynthesis; L-valine biosynthesis; L-valine from pyruvate: step 3/4. In terms of biological role, functions in the biosynthesis of branched-chain amino acids. Catalyzes the dehydration of (2R,3R)-2,3-dihydroxy-3-methylpentanoate (2,3-dihydroxy-3-methylvalerate) into 2-oxo-3-methylpentanoate (2-oxo-3-methylvalerate) and of (2R)-2,3-dihydroxy-3-methylbutanoate (2,3-dihydroxyisovalerate) into 2-oxo-3-methylbutanoate (2-oxoisovalerate), the penultimate precursor to L-isoleucine and L-valine, respectively. This is Dihydroxy-acid dehydratase from Buchnera aphidicola subsp. Cinara cedri (strain Cc).